Here is a 700-residue protein sequence, read N- to C-terminus: Mitogen-activated protein kinase 9 (700 aa).

The region spanning 107–398 is the Protein kinase domain; sequence YRIQEVIGKG…AEEALTDPYF (292 aa). ATP contacts are provided by residues 113–121 and lysine 136; that span reads IGKGSYGVV. The active-site Proton acceptor is aspartate 233. At threonine 269 the chain carries Phosphothreonine. Residues 269-271 carry the TXY motif; sequence TDY. At tyrosine 271 the chain carries Phosphotyrosine. A disordered region spans residues 475–523; the sequence is EESNGSGSAIPMERKHASLPRSTTVHSTPIPPKEQPLAASLKSSRPVSD.

This sequence belongs to the protein kinase superfamily. CMGC Ser/Thr protein kinase family. MAP kinase subfamily. Post-translationally, dually phosphorylated on Thr-269 and Tyr-271, which activates the enzyme.

The enzyme catalyses L-seryl-[protein] + ATP = O-phospho-L-seryl-[protein] + ADP + H(+). The catalysed reaction is L-threonyl-[protein] + ATP = O-phospho-L-threonyl-[protein] + ADP + H(+). Activated by threonine and tyrosine phosphorylation. The sequence is that of Mitogen-activated protein kinase 9 (MPK9) from Oryza sativa subsp. japonica (Rice).